The following is a 296-amino-acid chain: tRNA dimethylallyltransferase (296 aa).

Position 11–18 (Gly11–Thr18) interacts with ATP. Substrate is bound at residue Thr13–Thr18. An interaction with substrate tRNA region spans residues Asp36–Gln39.

Belongs to the IPP transferase family. In terms of assembly, monomer. Mg(2+) is required as a cofactor.

The catalysed reaction is adenosine(37) in tRNA + dimethylallyl diphosphate = N(6)-dimethylallyladenosine(37) in tRNA + diphosphate. Its function is as follows. Catalyzes the transfer of a dimethylallyl group onto the adenine at position 37 in tRNAs that read codons beginning with uridine, leading to the formation of N6-(dimethylallyl)adenosine (i(6)A). The sequence is that of tRNA dimethylallyltransferase from Streptococcus equi subsp. equi (strain 4047).